The chain runs to 357 residues: Spermatogenesis- and oogenesis-specific basic helix-loop-helix-containing protein 1 (357 aa).

The span at 1-14 shows a compositional bias: basic and acidic residues; that stretch reads MASGGHERANEDYR. Residues 1-40 are disordered; it reads MASGGHERANEDYRVSGITGCSKTPQPETQDSLQTSSQSS. Residues 19-31 show a composition bias toward polar residues; it reads TGCSKTPQPETQD. The bHLH domain occupies 54–105; it reads PSLRRNVVSERERRRRISLSCEHLRALLPQFDGRREDMASVLEMSVYFLQLA. Residues 145–210 form a disordered region; the sequence is KPDSGIAKPS…EPESSSLGPG (66 aa). Positions 200-209 are enriched in low complexity; the sequence is SEPESSSLGP.

In terms of assembly, forms both hetero- and homodimers with SOHLH2. In males, it is mainly expressed in testis, while in females it is mainly expressed in ovary. In testis, it is exclusively expressed in spermatogonia, with a preference for prespermatogonia and type A spermatogonia. In ovary, it is detected in germ cell cysts, primordial follicles, and primary follicles but is undetectable by the secondary follicle stage (at protein level). Expressed in the majority of spermatogonia in adult animals, but not in the most undifferentiated spermatogonial population.

It localises to the cytoplasm. It is found in the nucleus. Functionally, transcription regulator of both male and female germline differentiation. Suppresses genes involved in spermatogonial stem cells maintenance, and induces genes important for spermatogonial differentiation. Coordinates oocyte differentiation without affecting meiosis I. The polypeptide is Spermatogenesis- and oogenesis-specific basic helix-loop-helix-containing protein 1 (Sohlh1) (Mus musculus (Mouse)).